We begin with the raw amino-acid sequence, 851 residues long: DNA mismatch repair protein MutS (851 aa).

ATP is bound at residue 614 to 621 (GPNMGGKS).

The protein belongs to the DNA mismatch repair MutS family.

Its function is as follows. This protein is involved in the repair of mismatches in DNA. It is possible that it carries out the mismatch recognition step. This protein has a weak ATPase activity. The polypeptide is DNA mismatch repair protein MutS (Serratia proteamaculans (strain 568)).